The primary structure comprises 880 residues: Protein transport protein SEC23 A (880 aa).

A compositionally biased stretch (polar residues) spans Met-1–Gly-13. Residues Met-1–Pro-95 are disordered. Positions Pro-20–Pro-36 are enriched in pro residues. Low complexity predominate over residues Met-57–Pro-70. 4 residues coordinate Zn(2+): Cys-204, Cys-207, Cys-226, and Cys-229. The interval Cys-204–Cys-229 is zinc finger-like.

This sequence belongs to the SEC23/SEC24 family. SEC24 subfamily. As to quaternary structure, component of the coat protein complex II (COPII), composed of at least five proteins: the Sec23/24 complex, the Sec13/31 complex and Sar1. In terms of tissue distribution, mostly expressed in seedlings, roots, cotyledons, leaves, trichomes, leaf primordia and flowers, and, to a lower extent, in mature siliques.

The protein localises to the cytoplasmic vesicle. It is found in the COPII-coated vesicle membrane. The protein resides in the endoplasmic reticulum membrane. It localises to the membrane. Component of the coat protein complex II (COPII) which promotes the formation of transport vesicles from the endoplasmic reticulum (ER). The coat has two main functions, the physical deformation of the endoplasmic reticulum membrane into vesicles and the selection of cargo molecules. May contribute to COPII-coated vesicles formation and ER-Golgi vesicle transport. Together with SEC23D, essential for pollen wall development and exine patterning, probably by regulating endoplasmic reticulum (ER) export of lipids and proteins (e.g. sporopollenin) necessary for pollen wall formation. Also involved in plastid physiology in anther tapetal cells. In Arabidopsis thaliana (Mouse-ear cress), this protein is Protein transport protein SEC23 A.